The primary structure comprises 96 residues: Large ribosomal subunit protein uL23 (96 aa).

The protein belongs to the universal ribosomal protein uL23 family. As to quaternary structure, part of the 50S ribosomal subunit. Contacts protein L29, and trigger factor when it is bound to the ribosome.

In terms of biological role, one of the early assembly proteins it binds 23S rRNA. One of the proteins that surrounds the polypeptide exit tunnel on the outside of the ribosome. Forms the main docking site for trigger factor binding to the ribosome. The polypeptide is Large ribosomal subunit protein uL23 (Oleidesulfovibrio alaskensis (strain ATCC BAA-1058 / DSM 17464 / G20) (Desulfovibrio alaskensis)).